Consider the following 597-residue polypeptide: Bromodomain-containing protein 9 (597 aa).

Basic residues predominate over residues 1 to 10; sequence MGKKHKKHKA. Disordered stretches follow at residues 1–25 and 38–138; these read MGKK…KPLE and EVTE…ENES. 2 stretches are compositionally biased toward basic and acidic residues: residues 11 to 25 and 50 to 62; these read EWRS…KPLE and SYYD…ERER. Ser-56 is subject to Phosphoserine. The segment covering 63–73 has biased composition (basic residues); that stretch reads HKEKKKKKKKK. Residues 74 to 85 are compositionally biased toward basic and acidic residues; that stretch reads SEKEKHLDDEER. Basic residues predominate over residues 86 to 97; sequence RKRKEEKKRKRE. The span at 111 to 126 shows a compositional bias: basic and acidic residues; sequence DPGKKVEVEPPPDRPV. In terms of domain architecture, Bromo spans 136–240; it reads NESTPIQQLL…HAGFKMMSKQ (105 aa). The tract at residues 214–216 is histone H4K5ac H4K8ac and histone H4K5bu H4K8bu binding; it reads TYN. N6-acetyllysine; alternate is present on Lys-373. A Glycyl lysine isopeptide (Lys-Gly) (interchain with G-Cter in SUMO2); alternate cross-link involves residue Lys-373. The disordered stretch occupies residues 536–597; sequence EAQAERGGSR…SPEPAASAKT (62 aa). The segment covering 544–556 has biased composition (low complexity); it reads SRPSSNLSSLSNA. Phosphoserine is present on residues Ser-566 and Ser-588.

As to quaternary structure, binds acetylated histones H3 and H4. Binds butyrylated histone H4. Component of the multiprotein chromatin-remodeling subcomplex SWI/SNF called GBAF, which includes at least BICRA or BICRAL (mutually exclusive), BRD9, SS18, the core BAF subunits, SMARCA2/BRM, SMARCA4/BRG1/BAF190A, ACTL6A/BAF53, SMARCC1/BAF155, and SMARCD1/BAF60A. Interacts (via N-terminal bromodomain) with acetylated RAD54. Interacts (via C-terminus) with RAD51.

Its subcellular location is the nucleus. Plays a role in chromatin remodeling and regulation of transcription. Acts as a chromatin reader that recognizes and binds acylated histones: binds histones that are acetylated and/or butyrylated. Component of SWI/SNF chromatin remodeling subcomplex GBAF that carries out key enzymatic activities, changing chromatin structure by altering DNA-histone contacts within a nucleosome in an ATP-dependent manner. Also orchestrates the RAD51-RAD54 complex formation and thereby plays a role in homologous recombination (HR). This chain is Bromodomain-containing protein 9 (BRD9), found in Homo sapiens (Human).